The following is a 270-amino-acid chain: Acetyl-coenzyme A carboxylase carboxyl transferase subunit beta (270 aa).

The 255-residue stretch at 16–270 (LFAKCPACKH…KLLAFHGGSK (255 aa)) folds into the CoA carboxyltransferase N-terminal domain. 4 residues coordinate Zn(2+): Cys20, Cys23, Cys38, and Cys41. Residues 20–41 (CPACKHMIYQKDLGLEKICPKC) form a C4-type zinc finger.

This sequence belongs to the AccD/PCCB family. In terms of assembly, acetyl-CoA carboxylase is a heterohexamer composed of biotin carboxyl carrier protein (AccB), biotin carboxylase (AccC) and two subunits each of ACCase subunit alpha (AccA) and ACCase subunit beta (AccD). Requires Zn(2+) as cofactor.

It localises to the cytoplasm. The enzyme catalyses N(6)-carboxybiotinyl-L-lysyl-[protein] + acetyl-CoA = N(6)-biotinyl-L-lysyl-[protein] + malonyl-CoA. It functions in the pathway lipid metabolism; malonyl-CoA biosynthesis; malonyl-CoA from acetyl-CoA: step 1/1. In terms of biological role, component of the acetyl coenzyme A carboxylase (ACC) complex. Biotin carboxylase (BC) catalyzes the carboxylation of biotin on its carrier protein (BCCP) and then the CO(2) group is transferred by the transcarboxylase to acetyl-CoA to form malonyl-CoA. The protein is Acetyl-coenzyme A carboxylase carboxyl transferase subunit beta of Streptococcus mutans serotype c (strain NN2025).